The primary structure comprises 279 residues: Tryptophan synthase alpha chain (279 aa).

Residues glutamate 50 and aspartate 61 each act as proton acceptor in the active site.

Belongs to the TrpA family. In terms of assembly, tetramer of two alpha and two beta chains.

The enzyme catalyses (1S,2R)-1-C-(indol-3-yl)glycerol 3-phosphate + L-serine = D-glyceraldehyde 3-phosphate + L-tryptophan + H2O. It functions in the pathway amino-acid biosynthesis; L-tryptophan biosynthesis; L-tryptophan from chorismate: step 5/5. Functionally, the alpha subunit is responsible for the aldol cleavage of indoleglycerol phosphate to indole and glyceraldehyde 3-phosphate. This Methylobacterium radiotolerans (strain ATCC 27329 / DSM 1819 / JCM 2831 / NBRC 15690 / NCIMB 10815 / 0-1) protein is Tryptophan synthase alpha chain.